An 84-amino-acid chain; its full sequence is MKLTCVLVVLLLVLPFGDLITTSNTEDNKRGATPWQNSLKARGVCSTPEGSCVHNGCICQNAPCCHPSGCNWANVCPGFLWDKN.

Positions 1–19 (MKLTCVLVVLLLVLPFGDL) are cleaved as a signal peptide. A propeptide spanning residues 20-42 (ITTSNTEDNKRGATPWQNSLKAR) is cleaved from the precursor. Cystine bridges form between Cys-45–Cys-57, Cys-52–Cys-65, Cys-59–Cys-70, and Cys-64–Cys-76. Residue Pro-48 is modified to 4-hydroxyproline. The residue at position 72 (Trp-72) is a 6'-bromotryptophan. Pro-77 is modified (4-hydroxyproline). A 6'-bromotryptophan modification is found at Trp-81.

This sequence belongs to the conotoxin O1 superfamily. Expressed by the venom duct.

The protein resides in the secreted. Functionally, mu-conotoxins block voltage-gated sodium channels. This toxin reversibly blocks voltage-gated sodium channel in cephalopods, with no alteration in the voltage dependence of sodium conductance or on the kinetics of inactivation. The sequence is that of Mu-conotoxin-like Cal 12.2a from Californiconus californicus (California cone).